Here is a 623-residue protein sequence, read N- to C-terminus: MDDQNKNLILATGLSFLVIMVWFFLFPPPEAVTEGEPTVATQQTAVAPSATPDAPTTAVPPDADLPETQRVVIDTPRLQGSISMLGGRLDDLSLKSYHETLDPQSQIVRLLSPVGQPNAYYALYGWTPAGALGYEDVPGANTTWTQVGSGALGVDQPVTLQWDNGKGLVFTRTISVDDHYMFSVAQTVENNSGQAVQLAPYGIVARHGKPLNLQNFFVLHEGVVGRADGKLTETKYDKVAELPQVAREGAQAEVIDAQQDGWIGFTDKYWMTTLIPQQGQPFTSVTKYVPGADIYQAETREQLVTVAPGATAEVSSRLFAGAKEWETIRAYQNEGATEPTEGAEPIPGFIDSIDWGWFFFLTKPIFTVLHWLNHMIGNMGLAIIALTFLLKALVLPLAYKSYVSMARMKELQPELEALRERAGDDKMLMQREMMRLYKEKQVNPAAGCLPILIQIPIFFSLYKVIFVTIELRHAPFFGWLKDLSAPDPSSIFNFFGLAPWAAPTPGTTMALIFIGALPILLGVSMWLQQKLNPAPGDKAQAMIFAWMPWVFMFMLGHFASGLVLYWIVNNLITFTQQYVIMRSHGHHPDIFGNIKASFSRKPAAQPAGKAANDGAAPAKKRKP.

5 helical membrane passes run 8–28, 379–399, 449–469, 507–527, and 543–563; these read LILA…LFPP, MGLA…PLAY, LPIL…FVTI, TTMA…SMWL, and IFAW…SGLV. The span at 601-617 shows a compositional bias: low complexity; sequence KPAAQPAGKAANDGAAP. The disordered stretch occupies residues 601-623; it reads KPAAQPAGKAANDGAAPAKKRKP.

Belongs to the OXA1/ALB3/YidC family. Type 1 subfamily. As to quaternary structure, interacts with the Sec translocase complex via SecD. Specifically interacts with transmembrane segments of nascent integral membrane proteins during membrane integration.

The protein localises to the cell inner membrane. Required for the insertion and/or proper folding and/or complex formation of integral membrane proteins into the membrane. Involved in integration of membrane proteins that insert both dependently and independently of the Sec translocase complex, as well as at least some lipoproteins. Aids folding of multispanning membrane proteins. The polypeptide is Membrane protein insertase YidC (Cereibacter sphaeroides (strain ATCC 17023 / DSM 158 / JCM 6121 / CCUG 31486 / LMG 2827 / NBRC 12203 / NCIMB 8253 / ATH 2.4.1.) (Rhodobacter sphaeroides)).